Consider the following 148-residue polypeptide: Large ribosomal subunit protein uL15A (148 aa).

Composition is skewed to basic residues over residues Met-1–Gly-13 and Arg-21–Gly-31. The segment at Met-1–Gly-36 is disordered.

Belongs to the universal ribosomal protein uL15 family. As to quaternary structure, component of the large ribosomal subunit (LSU). Mature yeast ribosomes consist of a small (40S) and a large (60S) subunit. The 40S small subunit contains 1 molecule of ribosomal RNA (18S rRNA) and at least 33 different proteins. The large 60S subunit contains 3 rRNA molecules (25S, 5.8S and 5S rRNA) and at least 46 different proteins.

The protein resides in the cytoplasm. In terms of biological role, component of the ribosome, a large ribonucleoprotein complex responsible for the synthesis of proteins in the cell. The small ribosomal subunit (SSU) binds messenger RNAs (mRNAs) and translates the encoded message by selecting cognate aminoacyl-transfer RNA (tRNA) molecules. The large subunit (LSU) contains the ribosomal catalytic site termed the peptidyl transferase center (PTC), which catalyzes the formation of peptide bonds, thereby polymerizing the amino acids delivered by tRNAs into a polypeptide chain. The nascent polypeptides leave the ribosome through a tunnel in the LSU and interact with protein factors that function in enzymatic processing, targeting, and the membrane insertion of nascent chains at the exit of the ribosomal tunnel. In Schizosaccharomyces pombe (strain 972 / ATCC 24843) (Fission yeast), this protein is Large ribosomal subunit protein uL15A (rpl2802).